Here is a 195-residue protein sequence, read N- to C-terminus: Large ribosomal subunit protein bL17 (195 aa).

Positions 132-195 are disordered; the sequence is ARGTRFAARK…TEAKDTKPES (64 aa). Positions 159-186 are enriched in low complexity; sequence PTAAAVAAEAQAEQPTAEAVAADDAATT.

This sequence belongs to the bacterial ribosomal protein bL17 family. Part of the 50S ribosomal subunit. Contacts protein L32.

The protein is Large ribosomal subunit protein bL17 of Parafrankia sp. (strain EAN1pec).